We begin with the raw amino-acid sequence, 145 residues long: Large ribosomal subunit protein bL17 (145 aa).

It belongs to the bacterial ribosomal protein bL17 family. In terms of assembly, part of the 50S ribosomal subunit. Contacts protein L32.

This is Large ribosomal subunit protein bL17 from Francisella tularensis subsp. holarctica (strain FTNF002-00 / FTA).